A 389-amino-acid chain; its full sequence is uncharacterized protein (389 aa).

The signal sequence occupies residues 1–29 (MQPSFTPSGGKWLSIAVILLVIGLVVGFA).

This sequence belongs to the bacterial solute-binding protein 1 family. WtpA subfamily.

This is an uncharacterized protein from Thermoplasma volcanium (strain ATCC 51530 / DSM 4299 / JCM 9571 / NBRC 15438 / GSS1).